A 366-amino-acid chain; its full sequence is Histidinol-phosphate aminotransferase 1 (366 aa).

Lys-226 carries the post-translational modification N6-(pyridoxal phosphate)lysine.

It belongs to the class-II pyridoxal-phosphate-dependent aminotransferase family. Histidinol-phosphate aminotransferase subfamily. Homodimer. Pyridoxal 5'-phosphate serves as cofactor.

It catalyses the reaction L-histidinol phosphate + 2-oxoglutarate = 3-(imidazol-4-yl)-2-oxopropyl phosphate + L-glutamate. It functions in the pathway amino-acid biosynthesis; L-histidine biosynthesis; L-histidine from 5-phospho-alpha-D-ribose 1-diphosphate: step 7/9. In Mannheimia succiniciproducens (strain KCTC 0769BP / MBEL55E), this protein is Histidinol-phosphate aminotransferase 1.